The following is a 430-amino-acid chain: F-box protein At1g49990 (430 aa).

Residues Met1 to Leu45 enclose the F-box domain.

This is F-box protein At1g49990 from Arabidopsis thaliana (Mouse-ear cress).